The primary structure comprises 166 residues: NAD(P)H-quinone oxidoreductase subunit I, chloroplastic (166 aa).

4Fe-4S ferredoxin-type domains are found at residues 55–84 and 95–124; these read GRIH…VDWK and LNYS…MTEE. [4Fe-4S] cluster-binding residues include C64, C67, C70, C74, C104, C107, C110, and C114.

It belongs to the complex I 23 kDa subunit family. As to quaternary structure, NDH is composed of at least 16 different subunits, 5 of which are encoded in the nucleus. [4Fe-4S] cluster is required as a cofactor.

It localises to the plastid. The protein resides in the chloroplast thylakoid membrane. It catalyses the reaction a plastoquinone + NADH + (n+1) H(+)(in) = a plastoquinol + NAD(+) + n H(+)(out). The catalysed reaction is a plastoquinone + NADPH + (n+1) H(+)(in) = a plastoquinol + NADP(+) + n H(+)(out). Its function is as follows. NDH shuttles electrons from NAD(P)H:plastoquinone, via FMN and iron-sulfur (Fe-S) centers, to quinones in the photosynthetic chain and possibly in a chloroplast respiratory chain. The immediate electron acceptor for the enzyme in this species is believed to be plastoquinone. Couples the redox reaction to proton translocation, and thus conserves the redox energy in a proton gradient. This is NAD(P)H-quinone oxidoreductase subunit I, chloroplastic from Ambrosia trifida (Giant ragweed).